A 426-amino-acid polypeptide reads, in one-letter code: Putative acid phosphatase 1 (426 aa).

Residues Met1–Ala18 form the signal peptide. The Extracellular segment spans residues Gln19–Trp388. The Nucleophile role is filled by His29. N-linked (GlcNAc...) asparagine glycosylation is found at Asn37 and Asn145. Cys133 and Cys369 form a disulfide bridge. The active-site Proton donor is the Asp276. Asn380 carries N-linked (GlcNAc...) asparagine glycosylation. A helical membrane pass occupies residues Ile389 to Val409. At Arg410–Asn426 the chain is on the cytoplasmic side.

Belongs to the histidine acid phosphatase family.

It is found in the membrane. The enzyme catalyses a phosphate monoester + H2O = an alcohol + phosphate. The polypeptide is Putative acid phosphatase 1 (Caenorhabditis briggsae).